A 194-amino-acid polypeptide reads, in one-letter code: Glycerol-3-phosphate acyltransferase (194 aa).

Helical transmembrane passes span alanine 3 to leucine 23, valine 52 to tryptophan 72, methionine 80 to phenylalanine 100, valine 112 to valine 132, tryptophan 135 to phenylalanine 155, and leucine 162 to serine 182.

It belongs to the PlsY family. As to quaternary structure, probably interacts with PlsX.

It is found in the cell inner membrane. It catalyses the reaction an acyl phosphate + sn-glycerol 3-phosphate = a 1-acyl-sn-glycero-3-phosphate + phosphate. The protein operates within lipid metabolism; phospholipid metabolism. Its function is as follows. Catalyzes the transfer of an acyl group from acyl-phosphate (acyl-PO(4)) to glycerol-3-phosphate (G3P) to form lysophosphatidic acid (LPA). This enzyme utilizes acyl-phosphate as fatty acyl donor, but not acyl-CoA or acyl-ACP. This is Glycerol-3-phosphate acyltransferase from Trichlorobacter lovleyi (strain ATCC BAA-1151 / DSM 17278 / SZ) (Geobacter lovleyi).